A 605-amino-acid chain; its full sequence is Protein spinster (605 aa).

The segment at 1 to 94 is disordered; the sequence is MSLKHQKQSY…HPLGEHHHIP (94 aa). A compositionally biased stretch (low complexity) spans 27-38; that stretch reads SSGSSGSSSSEE. The segment covering 55 to 67 has biased composition (polar residues); it reads TTYSSQQLMPSDT. The segment covering 76–85 has biased composition (basic residues); sequence RLRPHHHHHH. A helical transmembrane segment spans residues 115–137; the sequence is FTVTVLCFVNLINYMDRFTIAGV. The N-linked (GlcNAc...) asparagine glycan is linked to Asn-149. A run of 5 helical transmembrane segments spans residues 153-173, 180-200, 203-223, 240-260, and 271-291; these read GLLQ…FGYL, PWIM…GSFM, FGWF…YSTI, MLAL…IVGS, and WALR…LLIK. N-linked (GlcNAc...) asparagine glycosylation occurs at Asn-319. Helical transmembrane passes span 329 to 349, 367 to 387, 401 to 421, 431 to 451, and 465 to 485; these read FTCV…FIYL, FNFG…GSFL, VICA…CLLV, LIFF…DILL, and FQIL…VGAI. N-linked (GlcNAc...) asparagine glycosylation occurs at Asn-519. Residues 558 to 578 form a helical membrane-spanning segment; sequence STSFVEVLGGIFFIFTACFII. Residue Asn-583 is glycosylated (N-linked (GlcNAc...) asparagine).

Belongs to the major facilitator superfamily. Spinster (TC 2.A.1.49) family. In terms of tissue distribution, enriched in brain (at protein level).

It localises to the late endosome membrane. The protein resides in the lysosome membrane. Probable sphingolipid transporter that plays a central role in endosomes and/or lysosomes storage. Involved in TGF-beta-mediated synaptic growth regulation both pre- and postsynaptically via its function in endosomal storage regulation. Also required during oogenesis by regulating yolk spheres storage. The protein is Protein spinster (spin) of Drosophila melanogaster (Fruit fly).